The chain runs to 149 residues: Large ribosomal subunit protein bL9 (149 aa).

This sequence belongs to the bacterial ribosomal protein bL9 family.

Its function is as follows. Binds to the 23S rRNA. The chain is Large ribosomal subunit protein bL9 from Bacillus licheniformis (strain ATCC 14580 / DSM 13 / JCM 2505 / CCUG 7422 / NBRC 12200 / NCIMB 9375 / NCTC 10341 / NRRL NRS-1264 / Gibson 46).